Reading from the N-terminus, the 26-residue chain is Aralin B chain (26 aa).

As to quaternary structure, disulfide-linked dimer of A and B chains. Post-translationally, glycosylated. High-mannose type oligosaccharides.

Lectin specific for galactose (Gal) and its derivatives. Induces apoptosis. Has cytotoxic activity against several human cancer cell lines. Is less cytotoxic to normal human cells. The chain is Aralin B chain from Aralia elata (Japanese angelica tree).